Reading from the N-terminus, the 241-residue chain is Small ribosomal subunit protein uS2 (241 aa).

It belongs to the universal ribosomal protein uS2 family.

This Salmonella choleraesuis (strain SC-B67) protein is Small ribosomal subunit protein uS2.